The chain runs to 225 residues: Ribonuclease 3 (225 aa).

In terms of domain architecture, RNase III spans 2–128 (LSTLIKKLKI…LFGAIYLDLG (127 aa)). E43 is a Mg(2+) binding site. D47 is an active-site residue. Mg(2+) is bound by residues N114 and E117. E117 is a catalytic residue. Residues 152 to 220 (DFKTQLQELV…ARYVLNILSK (69 aa)) enclose the DRBM domain.

This sequence belongs to the ribonuclease III family. As to quaternary structure, homodimer. Requires Mg(2+) as cofactor.

The protein resides in the cytoplasm. It catalyses the reaction Endonucleolytic cleavage to 5'-phosphomonoester.. In terms of biological role, digests double-stranded RNA. Involved in the processing of primary rRNA transcript to yield the immediate precursors to the large and small rRNAs (23S and 16S). Processes some mRNAs, and tRNAs when they are encoded in the rRNA operon. Processes pre-crRNA and tracrRNA of type II CRISPR loci if present in the organism. This chain is Ribonuclease 3, found in Phytoplasma mali (strain AT).